The sequence spans 475 residues: Sulfate adenylyltransferase subunit 1 (475 aa).

Residues 25-241 (KSLLRFLTCG…LENIEIQRVV (217 aa)) enclose the tr-type G domain. Positions 34 to 41 (GSVDDGKS) are G1. 34-41 (GSVDDGKS) is a binding site for GTP. The tract at residues 92–96 (GITID) is G2. The G3 stretch occupies residues 113–116 (DTPG). GTP is bound by residues 113-117 (DTPGH) and 168-171 (NKMD). Residues 168–171 (NKMD) are G4. The tract at residues 206 to 208 (SAL) is G5.

It belongs to the TRAFAC class translation factor GTPase superfamily. Classic translation factor GTPase family. CysN/NodQ subfamily. As to quaternary structure, heterodimer composed of CysD, the smaller subunit, and CysN.

The catalysed reaction is sulfate + ATP + H(+) = adenosine 5'-phosphosulfate + diphosphate. It participates in sulfur metabolism; hydrogen sulfide biosynthesis; sulfite from sulfate: step 1/3. Its function is as follows. With CysD forms the ATP sulfurylase (ATPS) that catalyzes the adenylation of sulfate producing adenosine 5'-phosphosulfate (APS) and diphosphate, the first enzymatic step in sulfur assimilation pathway. APS synthesis involves the formation of a high-energy phosphoric-sulfuric acid anhydride bond driven by GTP hydrolysis by CysN coupled to ATP hydrolysis by CysD. The sequence is that of Sulfate adenylyltransferase subunit 1 from Cronobacter sakazakii (strain ATCC BAA-894) (Enterobacter sakazakii).